A 313-amino-acid chain; its full sequence is HPr kinase/phosphorylase (313 aa).

Catalysis depends on residues H141 and K162. G156–S163 is a binding site for ATP. S163 is a binding site for Mg(2+). D180 serves as the catalytic Proton acceptor; for phosphorylation activity. Proton donor; for dephosphorylation activity. The segment at I203–D212 is important for the catalytic mechanism of both phosphorylation and dephosphorylation. E204 serves as a coordination point for Mg(2+). R247 is an active-site residue. The interval P268–R273 is important for the catalytic mechanism of dephosphorylation.

The protein belongs to the HPrK/P family. In terms of assembly, homohexamer. It depends on Mg(2+) as a cofactor.

It catalyses the reaction [HPr protein]-L-serine + ATP = [HPr protein]-O-phospho-L-serine + ADP + H(+). It carries out the reaction [HPr protein]-O-phospho-L-serine + phosphate + H(+) = [HPr protein]-L-serine + diphosphate. Catalyzes the ATP- as well as the pyrophosphate-dependent phosphorylation of a specific serine residue in HPr, a phosphocarrier protein of the phosphoenolpyruvate-dependent sugar phosphotransferase system (PTS). HprK/P also catalyzes the pyrophosphate-producing, inorganic phosphate-dependent dephosphorylation (phosphorolysis) of seryl-phosphorylated HPr (P-Ser-HPr). The two antagonistic activities of HprK/P are regulated by several intracellular metabolites, which change their concentration in response to the absence or presence of rapidly metabolisable carbon sources (glucose, fructose, etc.) in the growth medium. Therefore, by controlling the phosphorylation state of HPr, HPrK/P is a sensor enzyme that plays a major role in the regulation of carbon metabolism and sugar transport: it mediates carbon catabolite repression (CCR), and regulates PTS-catalyzed carbohydrate uptake and inducer exclusion. This Mycoplasma mycoides subsp. mycoides SC (strain CCUG 32753 / NCTC 10114 / PG1) protein is HPr kinase/phosphorylase.